The chain runs to 489 residues: MKYKDLRDFIAQLEQNGQLKRITREIDPYLEMTEISDRTLRAGGPALLFENPKGYSMPVLTNLFGTPDRVAMGMGQPNVGALRQVGTWLSYLKEPEPPRGLKELMEKLPIFKQVLNMPTKRLSSAPCQQLVLEGEAVDLDQIPIQHCWPGDVAPLVTWGLTITRGPYKKRQNLGIYRQQKIGKNKLIMRWLDHRGGAIDFREWQEAHPGERFPVVVALGADPATILGAVTPVPDSLSEYAFAGLLRGSRTEVVKALSCDLEVPASAEIVLEGYLEPGELAPEGPYGDHTGYYNEVDEFPVFTITHMTMRRDAIYHSTYTGRPPDEPAVLGVALNEVFVPLLQKQFPEIVDFYLPPEGCSYRMAVVTIKKRYPGHAKRVMLGVWSFLRQFMYTKFVIVCDDDINARDWKDVIWAITTRMDPARDTTLIEHTPIDYLDFASPVSGLGSKMGLDATNKWPGETNREWGQPIVQDEAVKQKVDSIWAELNILG.

A Mn(2+)-binding site is contributed by asparagine 172. Residues 175-177, 189-191, and 194-195 each bind prenylated FMN; these read IYR, RWL, and RG. Glutamate 238 is a binding site for Mn(2+). Aspartate 287 (proton donor) is an active-site residue.

Belongs to the UbiD family. Homohexamer. Prenylated FMN serves as cofactor. It depends on Mn(2+) as a cofactor.

The protein resides in the cell membrane. The catalysed reaction is a 4-hydroxy-3-(all-trans-polyprenyl)benzoate + H(+) = a 2-(all-trans-polyprenyl)phenol + CO2. It participates in cofactor biosynthesis; ubiquinone biosynthesis. Catalyzes the decarboxylation of 3-octaprenyl-4-hydroxy benzoate to 2-octaprenylphenol, an intermediate step in ubiquinone biosynthesis. This is 3-octaprenyl-4-hydroxybenzoate carboxy-lyase from Aeromonas salmonicida (strain A449).